The sequence spans 360 residues: Xanthohumol 4-O-methyltransferase (360 aa).

D227 contacts S-adenosyl-L-methionine. The active-site Proton acceptor is the H266.

This sequence belongs to the class I-like SAM-binding methyltransferase superfamily. Cation-independent O-methyltransferase family. In terms of assembly, homodimer. Highly expressed in lupulin glands. Detected in cones, male flowers and roots.

The protein resides in the cytoplasm. The catalysed reaction is xanthohumol + S-adenosyl-L-methionine = 4-O-methylxanthohumol + S-adenosyl-L-homocysteine + H(+). It catalyses the reaction desmethylxanthohumol + S-adenosyl-L-methionine = xanthohumol + S-adenosyl-L-homocysteine + H(+). The enzyme catalyses isoliquiritigenin + S-adenosyl-L-methionine = 2'-O-methylisoliquiritigenin + S-adenosyl-L-homocysteine + H(+). It carries out the reaction trans-resveratrol + S-adenosyl-L-methionine = 3-methoxy-4',5-dihydroxy-trans-stilbene + S-adenosyl-L-homocysteine + H(+). The protein operates within secondary metabolite biosynthesis. Its activity is regulated as follows. Inhibited by S-adenosyl homocysteine. Involved in the biosynthesis of prenylated phenolics natural products which contribute to the bitter taste of beer and display broad biological activities. O-methyltransferase with a low substrate selectivity. Methylates chalconaringenin, desmethylxanthohumol, xanthohumol, isoliquiritigenin, butein, 2',4-dihydroxychalcone, resveratrol, genistein and guaiacol. Catalyzes the biosynthesis of 2',4'-dihydroxy-4,6'-dimethoxy-3'-prenylchalcone (4-O-methylxanthohumol). This is Xanthohumol 4-O-methyltransferase from Humulus lupulus (European hop).